The following is a 343-amino-acid chain: Heat-inducible transcription repressor HrcA (343 aa).

The protein belongs to the HrcA family.

Its function is as follows. Negative regulator of class I heat shock genes (grpE-dnaK-dnaJ and groELS operons). Prevents heat-shock induction of these operons. The chain is Heat-inducible transcription repressor HrcA from Bacillus licheniformis (strain ATCC 14580 / DSM 13 / JCM 2505 / CCUG 7422 / NBRC 12200 / NCIMB 9375 / NCTC 10341 / NRRL NRS-1264 / Gibson 46).